Reading from the N-terminus, the 147-residue chain is Leghemoglobin 6 (147 aa).

In terms of domain architecture, Globin spans 2–147 (SFTDKQEALV…LATEIKKAMS (146 aa)). Nitrated tyrosine is present on residues Tyr-25 and Tyr-30. Ser-45 serves as a coordination point for heme b. The residue at position 45 (Ser-45) is a Phosphoserine. His-62 lines the O2 pocket. Residues Lys-65, His-94, and Lys-97 each contribute to the heme b site. Tyr-135 is subject to Nitrated tyrosine.

This sequence belongs to the plant globin family. Monomer. In terms of processing, nitrated in effective nodules and particularly in hypoxic conditions; this mechanism may play a protective role in the symbiosis by buffering toxic peroxynitrite NO(2)(-). Nitration level decrease during nodule senescence. Post-translationally, phosphorylation at Ser-45 disrupts the molecular environment of its porphyrin ring oxygen binding pocket, thus leading to a reduced oxygen consumption and to the delivery of oxygen O(2) to symbiosomes. As to expression, root nodules.

It is found in the cytoplasm. It localises to the cytosol. The protein resides in the nucleus. Leghemoglobin that reversibly binds oxygen O(2) through a pentacoordinated heme iron. In root nodules, facilitates the diffusion of oxygen to the bacteroids while preventing the bacterial nitrogenase from being inactivated by buffering dioxygen, nitric oxide and carbon monoxide, and promoting the formation of reactive oxygen species (ROS, e.g. H(2)O(2)). This role is essential for symbiotic nitrogen fixation (SNF). This chain is Leghemoglobin 6, found in Medicago truncatula (Barrel medic).